The sequence spans 177 residues: Anti-apoptotic protein NR13 (177 aa).

A BH1 motif is present at residues 75 to 94 (LEAEGGLNWGRLLALVVFTG). Residues 86–106 (LLALVVFTGTLAAALAESGCE) form a helical membrane-spanning segment. Residues 126-141 (EWLEEHGGWDGFCRFF) carry the BH2 motif. Residues 156-176 (SNAIMAAAGFGIAGLAFLLVV) form a helical membrane-spanning segment.

Belongs to the Bcl-2 family. As to quaternary structure, interacts with BAX. As to expression, expressed preferentially in heart, skeletal muscle, retina, optical tectum and bursa of Fabricius.

Its subcellular location is the cell membrane. In terms of biological role, shows anti-apoptotic properties. Counteract the pro-apoptotic activity of BAX. This Gallus gallus (Chicken) protein is Anti-apoptotic protein NR13 (NR13).